Here is a 125-residue protein sequence, read N- to C-terminus: Profilin-P (125 aa).

The residue at position 2 (Ser2) is an N-acetylserine.

It belongs to the profilin family. Occurs in many kinds of cells as a complex with monomeric actin in a 1:1 ratio.

Its subcellular location is the cytoplasm. It is found in the cytoskeleton. Functionally, binds to actin and affects the structure of the cytoskeleton. At high concentrations, profilin prevents the polymerization of actin, whereas it enhances it at low concentrations. By binding to PIP2, it inhibits the formation of IP3 and DG. The sequence is that of Profilin-P (PROP) from Physarum polycephalum (Slime mold).